The primary structure comprises 1496 residues: DNA-directed RNA polymerase subunit beta' (1496 aa).

Residues cysteine 70, cysteine 72, cysteine 85, and cysteine 88 each contribute to the Zn(2+) site. Mg(2+) contacts are provided by aspartate 461, aspartate 463, and aspartate 465. Zn(2+)-binding residues include cysteine 908, cysteine 982, cysteine 989, and cysteine 992. The segment at 1467–1496 is disordered; that stretch reads DKDMQVEGESEVPAIPPVAEGSAPEAPPAE.

Belongs to the RNA polymerase beta' chain family. The RNAP catalytic core consists of 2 alpha, 1 beta, 1 beta' and 1 omega subunit. When a sigma factor is associated with the core the holoenzyme is formed, which can initiate transcription. Mg(2+) is required as a cofactor. Zn(2+) serves as cofactor.

The enzyme catalyses RNA(n) + a ribonucleoside 5'-triphosphate = RNA(n+1) + diphosphate. Functionally, DNA-dependent RNA polymerase catalyzes the transcription of DNA into RNA using the four ribonucleoside triphosphates as substrates. The chain is DNA-directed RNA polymerase subunit beta' from Paramagnetospirillum magneticum (strain ATCC 700264 / AMB-1) (Magnetospirillum magneticum).